Reading from the N-terminus, the 132-residue chain is MTMTDPIADMLSRVRNASNAFHESVSMPSSKIKANIAEILKEEGYIADYTVNDAKVGKTLDIELKYGPSRERSISGLRRVSKPGLRVYAKSNELPQVLGGLGVAIISTSHGLLTDREAQNKGVGGEVLAYVW.

It belongs to the universal ribosomal protein uS8 family. In terms of assembly, part of the 30S ribosomal subunit. Contacts proteins S5 and S12.

One of the primary rRNA binding proteins, it binds directly to 16S rRNA central domain where it helps coordinate assembly of the platform of the 30S subunit. This is Small ribosomal subunit protein uS8 from Corynebacterium jeikeium (strain K411).